The primary structure comprises 205 residues: Superoxide dismutase [Mn] (205 aa).

Residues His30, His78, Asp166, and His170 each contribute to the Mn(2+) site.

Belongs to the iron/manganese superoxide dismutase family. Homodimer. Requires Mn(2+) as cofactor.

It carries out the reaction 2 superoxide + 2 H(+) = H2O2 + O2. Functionally, destroys superoxide anion radicals which are normally produced within the cells and which are toxic to biological systems. In Chlamydia muridarum (strain MoPn / Nigg), this protein is Superoxide dismutase [Mn] (sodA).